A 253-amino-acid chain; its full sequence is Pimeloyl-[acyl-carrier protein] methyl ester esterase (253 aa).

Substrate is bound by residues Trp-18, Ser-78–Leu-79, and Phe-139–Asp-143. Ser-78 (nucleophile) is an active-site residue. Active-site residues include Asp-203 and His-231. His-231 provides a ligand contact to substrate.

Belongs to the AB hydrolase superfamily. Carboxylesterase BioH family. Monomer.

The protein localises to the cytoplasm. It catalyses the reaction 6-carboxyhexanoyl-[ACP] methyl ester + H2O = 6-carboxyhexanoyl-[ACP] + methanol + H(+). Its pathway is cofactor biosynthesis; biotin biosynthesis. Its function is as follows. The physiological role of BioH is to remove the methyl group introduced by BioC when the pimeloyl moiety is complete. It allows to synthesize pimeloyl-ACP via the fatty acid synthetic pathway through the hydrolysis of the ester bonds of pimeloyl-ACP esters. This chain is Pimeloyl-[acyl-carrier protein] methyl ester esterase, found in Xanthomonas campestris pv. campestris (strain 8004).